Consider the following 337-residue polypeptide: Inositol 2-dehydrogenase (337 aa).

It belongs to the Gfo/Idh/MocA family. In terms of assembly, homotetramer.

It carries out the reaction myo-inositol + NAD(+) = scyllo-inosose + NADH + H(+). In terms of biological role, involved in the oxidation of myo-inositol (MI) to 2-keto-myo-inositol (2KMI or 2-inosose). The sequence is that of Inositol 2-dehydrogenase from Burkholderia ambifaria (strain MC40-6).